Reading from the N-terminus, the 317-residue chain is Small ribosomal subunit protein RACK1 (317 aa).

WD repeat units lie at residues 13–44, 61–91, 103–133, 146–178, 190–220, 231–260, and 281–311; these read GHSG…IMWK, GHSH…RLWD, GHTK…KLWN, SHTE…KVWN, GHTG…MLWD, DGGD…KIWD, and AEPP…RVWQ.

This sequence belongs to the WD repeat G protein beta family. Ribosomal protein RACK1 subfamily.

It localises to the cytoplasm. Its function is as follows. Involved in the recruitment, assembly and/or regulation of a variety of signaling molecules. Interacts with a wide variety of proteins and plays a role in many cellular processes. Required for VANGL2 membrane localization, inhibits Wnt signaling and regulates cellular polarization and oriented cell division during gastrulation. In Danio rerio (Zebrafish), this protein is Small ribosomal subunit protein RACK1 (gnb2l1).